The sequence spans 617 residues: Dihydroxy-acid dehydratase (617 aa).

Asp81 contributes to the Mg(2+) binding site. A [2Fe-2S] cluster-binding site is contributed by Cys122. The Mg(2+) site is built by Asp123 and Lys124. Lys124 bears the N6-carboxylysine mark. Position 195 (Cys195) interacts with [2Fe-2S] cluster. Glu491 contacts Mg(2+). Residue Ser517 is the Proton acceptor of the active site.

It belongs to the IlvD/Edd family. As to quaternary structure, homodimer. [2Fe-2S] cluster is required as a cofactor. Requires Mg(2+) as cofactor.

It catalyses the reaction (2R)-2,3-dihydroxy-3-methylbutanoate = 3-methyl-2-oxobutanoate + H2O. The catalysed reaction is (2R,3R)-2,3-dihydroxy-3-methylpentanoate = (S)-3-methyl-2-oxopentanoate + H2O. The protein operates within amino-acid biosynthesis; L-isoleucine biosynthesis; L-isoleucine from 2-oxobutanoate: step 3/4. It participates in amino-acid biosynthesis; L-valine biosynthesis; L-valine from pyruvate: step 3/4. Functionally, functions in the biosynthesis of branched-chain amino acids. Catalyzes the dehydration of (2R,3R)-2,3-dihydroxy-3-methylpentanoate (2,3-dihydroxy-3-methylvalerate) into 2-oxo-3-methylpentanoate (2-oxo-3-methylvalerate) and of (2R)-2,3-dihydroxy-3-methylbutanoate (2,3-dihydroxyisovalerate) into 2-oxo-3-methylbutanoate (2-oxoisovalerate), the penultimate precursor to L-isoleucine and L-valine, respectively. In Nitrosococcus oceani (strain ATCC 19707 / BCRC 17464 / JCM 30415 / NCIMB 11848 / C-107), this protein is Dihydroxy-acid dehydratase.